We begin with the raw amino-acid sequence, 509 residues long: Photosystem II CP47 reaction center protein (509 aa).

Helical transmembrane passes span A21–S36, I101–W115, G140–F156, I203–T218, V237–T252, and N457–R472.

Belongs to the PsbB/PsbC family. PsbB subfamily. PSII is composed of 1 copy each of membrane proteins PsbA, PsbB, PsbC, PsbD, PsbE, PsbF, PsbH, PsbI, PsbJ, PsbK, PsbL, PsbM, PsbT, PsbX, PsbY, PsbZ, Psb30/Ycf12, at least 3 peripheral proteins of the oxygen-evolving complex and a large number of cofactors. It forms dimeric complexes. It depends on Binds multiple chlorophylls. PSII binds additional chlorophylls, carotenoids and specific lipids. as a cofactor.

It localises to the plastid. The protein resides in the chloroplast thylakoid membrane. In terms of biological role, one of the components of the core complex of photosystem II (PSII). It binds chlorophyll and helps catalyze the primary light-induced photochemical processes of PSII. PSII is a light-driven water:plastoquinone oxidoreductase, using light energy to abstract electrons from H(2)O, generating O(2) and a proton gradient subsequently used for ATP formation. In Porphyra purpurea (Red seaweed), this protein is Photosystem II CP47 reaction center protein.